The primary structure comprises 215 residues: Thymidylate kinase (215 aa).

Residue 12-19 (GIDGAGKS) participates in ATP binding.

Belongs to the thymidylate kinase family.

It catalyses the reaction dTMP + ATP = dTDP + ADP. In terms of biological role, phosphorylation of dTMP to form dTDP in both de novo and salvage pathways of dTTP synthesis. The polypeptide is Thymidylate kinase (Albidiferax ferrireducens (strain ATCC BAA-621 / DSM 15236 / T118) (Rhodoferax ferrireducens)).